The sequence spans 132 residues: Replication enhancer protein (132 aa).

This sequence belongs to the geminiviridae replication enhancer protein family. Homooligomer. Interacts with the replication-associated protein (REP). Interacts with host proliferating cell nuclear antigen (PCNA). Interacts with host retinoblastoma-related protein 1 (RBR1), and may thereby deregulate the host cell cycle. Oligomerization and interaction with PCNA are necessary for optimal replication enhancement.

Functionally, increases viral DNA accumulation. Enhances infectivity and symptom expression. The polypeptide is Replication enhancer protein (Macroptilium lathyroides (Lima bean)).